We begin with the raw amino-acid sequence, 366 residues long: BIIDXI-like protein At5g11420 (366 aa).

An N-terminal signal peptide occupies residues 1–22 (MKGGSLSFLFVLLIATITSVIC). N-linked (GlcNAc...) asparagine glycans are attached at residues asparagine 98, asparagine 122, and asparagine 209.

Interacts with PME3.

Its subcellular location is the secreted. The protein localises to the cell wall. Functionally, together with BIIDXI, acts as a positive regulator of PME3 activity during several developmental processes, including seed germination and endosperm (testa) rupture at the micropyle, probably by modulating the pectin status in cell walls. The chain is BIIDXI-like protein At5g11420 from Arabidopsis thaliana (Mouse-ear cress).